We begin with the raw amino-acid sequence, 236 residues long: Ribonuclease HII (236 aa).

Residues 27 to 219 form the RNase H type-2 domain; that stretch reads RILCGVDEAG…VRRALDGAPP (193 aa). The a divalent metal cation site is built by aspartate 33, glutamate 34, and aspartate 128. The disordered stretch occupies residues 212–236; it reads RALDGAPPPAGDAVPQTDAKTAWAD.

This sequence belongs to the RNase HII family. It depends on Mn(2+) as a cofactor. Requires Mg(2+) as cofactor.

The protein resides in the cytoplasm. It catalyses the reaction Endonucleolytic cleavage to 5'-phosphomonoester.. In terms of biological role, endonuclease that specifically degrades the RNA of RNA-DNA hybrids. This is Ribonuclease HII from Ralstonia nicotianae (strain ATCC BAA-1114 / GMI1000) (Ralstonia solanacearum).